Reading from the N-terminus, the 256-residue chain is Na(+)-translocating NADH-quinone reductase subunit C (256 aa).

Residues 12–32 (LGVVIGLSLVCSIIVSTAAVG) traverse the membrane as a helical segment. T224 carries the post-translational modification FMN phosphoryl threonine.

Belongs to the NqrC family. As to quaternary structure, composed of six subunits; NqrA, NqrB, NqrC, NqrD, NqrE and NqrF. The cofactor is FMN.

It is found in the cell inner membrane. It catalyses the reaction a ubiquinone + n Na(+)(in) + NADH + H(+) = a ubiquinol + n Na(+)(out) + NAD(+). Its activity is regulated as follows. This reaction is tightly coupled to the Na(+) pumping activity and specifically requires Na(+) for activity. Inhibited by korormicin and 2-N-heptyl-4-hydroxyquinoline N-oxide (HQNO). NQR complex catalyzes the reduction of ubiquinone-1 to ubiquinol by two successive reactions, coupled with the transport of Na(+) ions from the cytoplasm to the periplasm. NqrA to NqrE are probably involved in the second step, the conversion of ubisemiquinone to ubiquinol. The polypeptide is Na(+)-translocating NADH-quinone reductase subunit C (Vibrio alginolyticus).